We begin with the raw amino-acid sequence, 194 residues long: MNLIPTVIEQTNRGERAYDIYSRLLKDRIIMLGTAIDDNVANSIVAQLLFLQAEDPDKDISLYINSPGGSITAGMAIYDTMQYIKPNVSTICIGMAASMGAFLLAAGAKGKRFALPNSEVMIHQPLGGTRGQASDIEIHTRRILEMRETLNRILAERTGQPLEQIAKDTDRDNFMTAEKAREYGLIDKVIETTK.

Ser98 functions as the Nucleophile in the catalytic mechanism. Residue His123 is part of the active site.

Belongs to the peptidase S14 family. In terms of assembly, fourteen ClpP subunits assemble into 2 heptameric rings which stack back to back to give a disk-like structure with a central cavity, resembling the structure of eukaryotic proteasomes.

It is found in the cytoplasm. The enzyme catalyses Hydrolysis of proteins to small peptides in the presence of ATP and magnesium. alpha-casein is the usual test substrate. In the absence of ATP, only oligopeptides shorter than five residues are hydrolyzed (such as succinyl-Leu-Tyr-|-NHMec, and Leu-Tyr-Leu-|-Tyr-Trp, in which cleavage of the -Tyr-|-Leu- and -Tyr-|-Trp bonds also occurs).. Its function is as follows. Cleaves peptides in various proteins in a process that requires ATP hydrolysis. Has a chymotrypsin-like activity. Plays a major role in the degradation of misfolded proteins. ClpXP1 is involved in the complete degradation of the Site-2 clipped anti-sigma-W factor RsiW. This results in the release of SigW and the transcription activation of the genes under the control of the sigma-W factor. The protein is ATP-dependent Clp protease proteolytic subunit 1 of Halalkalibacterium halodurans (strain ATCC BAA-125 / DSM 18197 / FERM 7344 / JCM 9153 / C-125) (Bacillus halodurans).